Consider the following 438-residue polypeptide: Coiled-coil domain-containing protein 78 (438 aa).

2 coiled-coil regions span residues 74 to 105 (HLHEQHEAEIFQLKSEILRLESRVLELELRGD) and 217 to 246 (SCQGQLRQAEAENARLQLQLKKLKDEYVLR). Residues 345–381 (FSHREDQHGGPGALLSSPKKRPGGASQGGTSEPQGLD) form a disordered region.

The protein belongs to the CCDC78 family. Expressed primarily in skeletal muscle.

Its subcellular location is the cytoplasm. It is found in the cytoskeleton. The protein resides in the microtubule organizing center. The protein localises to the centrosome. It localises to the centriole. Its subcellular location is the perinuclear region. It is found in the cell membrane. The protein resides in the sarcolemma. The protein localises to the sarcoplasmic reticulum. Its function is as follows. Component of the deuterosome, a structure that promotes de novo centriole amplification in multiciliated cells that can generate more than 100 centrioles. Deuterosome-mediated centriole amplification occurs in terminally differentiated multiciliated cells (G1/0) and not in S phase. Essential for centriole amplification and is required for CEP152 localization to the deuterosome. The sequence is that of Coiled-coil domain-containing protein 78 (CCDC78) from Homo sapiens (Human).